The primary structure comprises 692 residues: Protein arginine N-methyltransferase 7 (692 aa).

SAM-dependent MTase PRMT-type domains follow at residues 14-359 (ENSW…YSLW) and 368-692 (AKTV…QEKR).

Belongs to the class I-like SAM-binding methyltransferase superfamily. Protein arginine N-methyltransferase family. PRMT7 subfamily.

Essential arginine methyltransferase that can both catalyze the formation of omega-N monomethylarginine (MMA) and symmetrical dimethylarginine (sDMA). Specifically mediates the symmetrical dimethylation of arginine residues in the small nuclear ribonucleoproteins SmD1 and SmD3. This chain is Protein arginine N-methyltransferase 7 (Art7), found in Drosophila persimilis (Fruit fly).